A 449-amino-acid chain; its full sequence is mRNA-capping enzyme subunit alpha (449 aa).

The active-site N6-GMP-lysine intermediate is the K66. The segment at 405–449 (DERKNGAYQHHSSSFSESRQQPKAEPVAEKKQTEPKYVDDDDWSD) is disordered. The segment covering 414–423 (HHSSSFSESR) has biased composition (polar residues). Residues 424–442 (QQPKAEPVAEKKQTEPKYV) are compositionally biased toward basic and acidic residues.

The protein belongs to the eukaryotic GTase family. As to quaternary structure, heterodimer. The mRNA-capping enzyme is composed of two separate chains alpha and beta, respectively a mRNA guanylyltransferase and an mRNA 5'-triphosphate monophosphatase.

The protein localises to the nucleus. It carries out the reaction a 5'-end diphospho-ribonucleoside in mRNA + GTP + H(+) = a 5'-end (5'-triphosphoguanosine)-ribonucleoside in mRNA + diphosphate. In terms of biological role, second step of mRNA capping. Transfer of the GMP moiety of GTP to the 5'-end of RNA via an enzyme-GMP covalent reaction intermediate. The chain is mRNA-capping enzyme subunit alpha (CEG1) from Candida glabrata (strain ATCC 2001 / BCRC 20586 / JCM 3761 / NBRC 0622 / NRRL Y-65 / CBS 138) (Yeast).